The primary structure comprises 101 residues: NAD(P)H-quinone oxidoreductase subunit 4L, chloroplastic (101 aa).

3 helical membrane passes run 2–22 (MFEHVLFLSVYLFSIGIYGLI), 32–52 (ICLELILNSINLNLVTFSDLF), and 61–81 (IFAIFVIALAAAEAAIGLSIL).

The protein belongs to the complex I subunit 4L family. NDH is composed of at least 16 different subunits, 5 of which are encoded in the nucleus.

It is found in the plastid. It localises to the chloroplast thylakoid membrane. It carries out the reaction a plastoquinone + NADH + (n+1) H(+)(in) = a plastoquinol + NAD(+) + n H(+)(out). The catalysed reaction is a plastoquinone + NADPH + (n+1) H(+)(in) = a plastoquinol + NADP(+) + n H(+)(out). Its function is as follows. NDH shuttles electrons from NAD(P)H:plastoquinone, via FMN and iron-sulfur (Fe-S) centers, to quinones in the photosynthetic chain and possibly in a chloroplast respiratory chain. The immediate electron acceptor for the enzyme in this species is believed to be plastoquinone. Couples the redox reaction to proton translocation, and thus conserves the redox energy in a proton gradient. This is NAD(P)H-quinone oxidoreductase subunit 4L, chloroplastic from Agrostis stolonifera (Creeping bentgrass).